Consider the following 308-residue polypeptide: Transcriptional adapter 1-1 (308 aa).

Belongs to the TADA1 family. Component of the Spt-Ada-Gcn5 acetyltransferase (SAGA) complex consisting of wda/Taf5L, Saf6, Taf9, Taf10b, Taf12, Ada1, Spt3, Spt7, Spt20, Sf3b3, Sf3b5, Nipped-A/Tra1, a histone acetyltransferase (HAT) module made up of Gcn5, Ada2b (Isoform B), Ada3 and Sgf29, and a deubiquitinase (DUB) module made up of not/nonstop, Sgf11 and e(y)2 tethered to SAGA by Atxn7. Not a component of the Ada2a-containing ATAC complex.

It localises to the nucleus. Its function is as follows. Component of the transcription regulatory complex SAGA, a multiprotein complex that activates transcription by remodeling chromatin and mediating histone acetylation and deubiquitination. The SAGA complex predominantly acetylates histone H3. This chain is Transcriptional adapter 1-1, found in Drosophila melanogaster (Fruit fly).